Consider the following 196-residue polypeptide: Putative adenylate kinase (196 aa).

Residues G10, G12, K13, T14, and S15 each coordinate ATP. Residues 30-53 form an NMP region; it reads YLNDLIKEEHLYSEVDEERDSVIA. Positions 118–128 are LID; sequence KRGYSEEKINE. R119 contributes to the ATP binding site.

The protein belongs to the adenylate kinase family. AK6 subfamily. In terms of assembly, interacts with uS11. Not a structural component of 40S pre-ribosomes, but transiently interacts with them by binding to uS11.

It carries out the reaction AMP + ATP = 2 ADP. The enzyme catalyses ATP + H2O = ADP + phosphate + H(+). Functionally, broad-specificity nucleoside monophosphate (NMP) kinase that catalyzes the reversible transfer of the terminal phosphate group between nucleoside triphosphates and monophosphates. Also has ATPase activity. Involved in the late maturation steps of the 30S ribosomal particles, specifically 16S rRNA maturation. While NMP activity is not required for ribosome maturation, ATPase activity is. Associates transiently with small ribosomal subunit protein uS11. ATP hydrolysis breaks the interaction with uS11. May temporarily remove uS11 from the ribosome to enable a conformational change of the ribosomal RNA that is needed for the final maturation step of the small ribosomal subunit. This chain is Putative adenylate kinase, found in Methanosarcina mazei (strain ATCC BAA-159 / DSM 3647 / Goe1 / Go1 / JCM 11833 / OCM 88) (Methanosarcina frisia).